The sequence spans 544 residues: CTP synthase (544 aa).

The tract at residues 1 to 267 (MSKFVFVTGG…GDLLVSRLHL (267 aa)) is amidoligase domain. S13 is a CTP binding site. S13 contacts UTP. 14 to 19 (SVGKGI) is a binding site for ATP. Residue Y54 coordinates L-glutamine. D71 is an ATP binding site. The Mg(2+) site is built by D71 and E141. Residues 148–150 (DIE), 188–193 (KTKPTQ), and K224 contribute to the CTP site. UTP-binding positions include 188-193 (KTKPTQ) and K224. Residues 299–534 (YVELKDAYYS…INAAKKVIRD (236 aa)) form the Glutamine amidotransferase type-1 domain. G354 contacts L-glutamine. Catalysis depends on C381, which acts as the Nucleophile; for glutamine hydrolysis. L-glutamine-binding positions include 382-385 (LGMQ), E405, and R462. Active-site residues include H507 and E509.

The protein belongs to the CTP synthase family. In terms of assembly, homotetramer.

The catalysed reaction is UTP + L-glutamine + ATP + H2O = CTP + L-glutamate + ADP + phosphate + 2 H(+). It carries out the reaction L-glutamine + H2O = L-glutamate + NH4(+). The enzyme catalyses UTP + NH4(+) + ATP = CTP + ADP + phosphate + 2 H(+). Its pathway is pyrimidine metabolism; CTP biosynthesis via de novo pathway; CTP from UDP: step 2/2. Its activity is regulated as follows. Allosterically activated by GTP, when glutamine is the substrate; GTP has no effect on the reaction when ammonia is the substrate. The allosteric effector GTP functions by stabilizing the protein conformation that binds the tetrahedral intermediate(s) formed during glutamine hydrolysis. Inhibited by the product CTP, via allosteric rather than competitive inhibition. Functionally, catalyzes the ATP-dependent amination of UTP to CTP with either L-glutamine or ammonia as the source of nitrogen. Regulates intracellular CTP levels through interactions with the four ribonucleotide triphosphates. In Dehalococcoides mccartyi (strain ATCC BAA-2266 / KCTC 15142 / 195) (Dehalococcoides ethenogenes (strain 195)), this protein is CTP synthase.